A 355-amino-acid polypeptide reads, in one-letter code: UDP-N-acetylglucosamine--N-acetylmuramyl-(pentapeptide) pyrophosphoryl-undecaprenol N-acetylglucosamine transferase (355 aa).

UDP-N-acetyl-alpha-D-glucosamine-binding positions include 14–16 (TGG), Asn-123, Arg-164, Ser-190, and Gln-284.

It belongs to the glycosyltransferase 28 family. MurG subfamily.

The protein resides in the cell inner membrane. It carries out the reaction di-trans,octa-cis-undecaprenyl diphospho-N-acetyl-alpha-D-muramoyl-L-alanyl-D-glutamyl-meso-2,6-diaminopimeloyl-D-alanyl-D-alanine + UDP-N-acetyl-alpha-D-glucosamine = di-trans,octa-cis-undecaprenyl diphospho-[N-acetyl-alpha-D-glucosaminyl-(1-&gt;4)]-N-acetyl-alpha-D-muramoyl-L-alanyl-D-glutamyl-meso-2,6-diaminopimeloyl-D-alanyl-D-alanine + UDP + H(+). It participates in cell wall biogenesis; peptidoglycan biosynthesis. Cell wall formation. Catalyzes the transfer of a GlcNAc subunit on undecaprenyl-pyrophosphoryl-MurNAc-pentapeptide (lipid intermediate I) to form undecaprenyl-pyrophosphoryl-MurNAc-(pentapeptide)GlcNAc (lipid intermediate II). The polypeptide is UDP-N-acetylglucosamine--N-acetylmuramyl-(pentapeptide) pyrophosphoryl-undecaprenol N-acetylglucosamine transferase (Synechocystis sp. (strain ATCC 27184 / PCC 6803 / Kazusa)).